The following is a 144-amino-acid chain: Large ribosomal subunit protein uL15 (144 aa).

The disordered stretch occupies residues 1 to 54 (MRLNTIKPGEGSKKTAKRVGRGIGSGLGKTCGRGHKGQKSRSGGFHKVGFEGGQ). A compositionally biased stretch (gly residues) spans 21 to 31 (RGIGSGLGKTC).

The protein belongs to the universal ribosomal protein uL15 family. In terms of assembly, part of the 50S ribosomal subunit.

In terms of biological role, binds to the 23S rRNA. The chain is Large ribosomal subunit protein uL15 from Dechloromonas aromatica (strain RCB).